Here is a 237-residue protein sequence, read N- to C-terminus: tRNA (guanine-N(1)-)-methyltransferase (237 aa).

S-adenosyl-L-methionine-binding positions include G112 and 132 to 137 (IGDFVL).

This sequence belongs to the RNA methyltransferase TrmD family. As to quaternary structure, homodimer.

Its subcellular location is the cytoplasm. It carries out the reaction guanosine(37) in tRNA + S-adenosyl-L-methionine = N(1)-methylguanosine(37) in tRNA + S-adenosyl-L-homocysteine + H(+). Its function is as follows. Specifically methylates guanosine-37 in various tRNAs. The chain is tRNA (guanine-N(1)-)-methyltransferase from Thermosynechococcus vestitus (strain NIES-2133 / IAM M-273 / BP-1).